We begin with the raw amino-acid sequence, 441 residues long: uncharacterized protein (441 aa).

11 helical membrane passes run 62–82 (FLSL…FEIG), 88–108 (LILT…KLFG), 112–132 (IALT…IIAL), 154–174 (ALLH…LLVV), 192–212 (WMFF…YLLY), 224–244 (ALMI…GVAS), 247–267 (ANLS…YMVC), 312–332 (IVLF…ATFA), 335–355 (ISVM…IIFL), 363–383 (QGMW…NLLL), and 399–419 (ILCS…LLYA).

The protein resides in the membrane. This is an uncharacterized protein from Schizosaccharomyces pombe (strain 972 / ATCC 24843) (Fission yeast).